A 180-amino-acid chain; its full sequence is Ribulose bisphosphate carboxylase small subunit, chloroplastic (180 aa).

A chloroplast-targeting transit peptide spans 1–56 (MASSVLSSAAVATRSNVAQANMVAPFTGLKSAASFPVSRKQNLDITSIASNGGRVQ).

Belongs to the RuBisCO small chain family. As to quaternary structure, heterohexadecamer of 8 large and 8 small subunits.

The protein resides in the plastid. It is found in the chloroplast. Its function is as follows. RuBisCO catalyzes two reactions: the carboxylation of D-ribulose 1,5-bisphosphate, the primary event in carbon dioxide fixation, as well as the oxidative fragmentation of the pentose substrate. Both reactions occur simultaneously and in competition at the same active site. Although the small subunit is not catalytic it is essential for maximal activity. The polypeptide is Ribulose bisphosphate carboxylase small subunit, chloroplastic (Nicotiana plumbaginifolia (Leadwort-leaved tobacco)).